The following is a 447-amino-acid chain: UPF0210 protein OEOE_0945 (447 aa).

It belongs to the UPF0210 family. Homodimer.

This is UPF0210 protein OEOE_0945 from Oenococcus oeni (strain ATCC BAA-331 / PSU-1).